A 587-amino-acid chain; its full sequence is Kelch-like protein 3 (587 aa).

Ser-10 carries the phosphoserine modification. In terms of domain architecture, BTB spans Cys-50–Glu-117. The 103-residue stretch at Cys-152 to Glu-254 folds into the BACK domain. At Thr-295 the chain carries Phosphothreonine. Kelch repeat units lie at residues Val-302–Gly-347, His-348–Asp-394, Leu-396–Gly-441, Lys-442–Gly-490, Gln-491–Gly-537, and Leu-539–Lys-585. The residue at position 375 (Thr-375) is a Phosphothreonine. Position 376 is a phosphoserine (Ser-376). Ser-433 carries the phosphoserine; by PKA and PKC modification.

Belongs to the KLHL3 family. In terms of assembly, homodimer. Component of the BCR(KLHL3) E3 ubiquitin ligase complex, at least composed of CUL3 and KLHL3 and RBX1. Interacts with CLDN8. Phosphorylation at Ser-433 by PKA or PKC decreases the interaction with WNK1 and WNK4, leading to inhibit their degradation by the BCR(KLHL3) complex. Phosphorylated at Ser-433 by PKC in response to angiotensin II signaling, decreasing ability to promote degradation of WNK1 and WNK4, leading to activation of Na-Cl cotransporter SLC12A3/NCC. Phosphorylation at Ser-433 is increased by insulin. Dephosphorylated at Ser-433 by calcineurin PPP3CA, promoting degradation of WNK1 and WNK4. In terms of tissue distribution, widely expressed.

It localises to the cytoplasm. It is found in the cytosol. Its subcellular location is the cytoskeleton. It participates in protein modification; protein ubiquitination. Its function is as follows. Substrate-specific adapter of a BCR (BTB-CUL3-RBX1) E3 ubiquitin ligase complex that acts as a regulator of ion transport in the distal nephron. The BCR(KLHL3) complex acts by mediating ubiquitination and degradation of WNK1 and WNK4, two activators of Na-Cl cotransporter SLC12A3/NCC in distal convoluted tubule cells of kidney, thereby regulating NaCl reabsorption. The BCR(KLHL3) complex also mediates ubiquitination and degradation of WNK3. The BCR(KLHL3) complex also mediates ubiquitination of CLDN8, a tight-junction protein required for paracellular chloride transport in the kidney, leading to its degradation. In Homo sapiens (Human), this protein is Kelch-like protein 3.